The sequence spans 195 residues: uncharacterized protein (195 aa).

The segment at 86–158 (LPSEGGWTSG…PAPVSGEPPE (73 aa)) is disordered.

This is an uncharacterized protein from Homo sapiens (Human).